A 269-amino-acid chain; its full sequence is Thyroxine 5-deiodinase (269 aa).

Topologically, residues methionine 1 to glutamine 14 are cytoplasmic. Residues leucine 15 to leucine 35 traverse the membrane as a helical; Signal-anchor for type II membrane protein segment. Residues aspartate 36–valine 269 are Extracellular-facing. Residue selenocysteine 133 is part of the active site. Residue selenocysteine 133 is a non-standard amino acid, selenocysteine.

It belongs to the iodothyronine deiodinase family. As to quaternary structure, monomer. Homodimer. May undergo minor heretodimerization with DIO1 and DIO2.

It localises to the cell membrane. Its subcellular location is the endosome membrane. The catalysed reaction is 3,3',5'-triiodo-L-thyronine + iodide + A + H(+) = L-thyroxine + AH2. It carries out the reaction 3,3'-diiodo-L-thyronine + iodide + A + H(+) = 3,3',5-triiodo-L-thyronine + AH2. It catalyses the reaction 3-iodo-L-thyronine + iodide + A + H(+) = 3,5-diiodo-L-thyronine + AH2. The enzyme catalyses L-thyronine + iodide + A + H(+) = 3-iodo-L-thyronine + AH2. The catalysed reaction is 3',5'-diiodo-L-thyronine + iodide + A + H(+) = 3,3',5'-triiodo-L-thyronine + AH2. It carries out the reaction 3'-iodo-L-thyronine + iodide + A + H(+) = 3,3'-diiodo-L-thyronine + AH2. It catalyses the reaction 3,3',5'-triiodothyronamine + iodide + A + H(+) = 3,3',5,5'-tetraiodothyronamine + AH2. The enzyme catalyses 3',5'-diiodothyronamine + iodide + A + H(+) = 3,3',5'-triiodothyronamine + AH2. The catalysed reaction is 3,3'-diiodothyronamine + iodide + A + H(+) = 3,3',5-triiodothyronamine + AH2. It carries out the reaction 3-iodothyronamine + iodide + A + H(+) = 3,5-diiodothyronamine + AH2. It catalyses the reaction 3'-iodothyronamine + iodide + A + H(+) = 3,3'-diiodothyronamine + AH2. The enzyme catalyses thyronamine + iodide + A + H(+) = 3-iodothyronamine + AH2. In terms of biological role, plays a crucial role in the metabolism of thyroid hormones (TH) and has specific roles in TH activation and inactivation by deiodination. Catalyzes the deiodination of L-thyroxine (T4) to 3,3',5'-triiodothyronine (rT3), 3,5-diiodothyronine (3,5-T2) to 3-monoiodothyronine (3-T1), rT3 to 3',5'-diiodothyronine (3',5'-T2) and 3,3'-diiodothyronine (3,3'-T2) to 3'-monoiodothyronine (3'-T1) via inner-ring deiodination (IRD). Catalyzes the deiodination of 3,5,3'-triiodothyronine (T3) to 3,3'-diiodothyronine (3,3'-T2) via IRD. Catalyzes the deiodination of 3-T1 to L-thyronine (T0) via outer-ring deiodination (ORD). Catalyzes the tyrosyl ring deiodinations of 3,3',5,5'-tetraiodothyronamine, 3,3',5'-triiodothyronamine, 3,5,3'-triiodothyronamine, 3,5-diiodothyronamine, 3,3'-diiodothyronamine and 3-iodothyronamine. In Aquarana catesbeiana (American bullfrog), this protein is Thyroxine 5-deiodinase (dio3).